A 399-amino-acid polypeptide reads, in one-letter code: MSSDMEGGMITMKANDTTKYLIHAEIEAEGVVERPDVVGAIFGQTEGLLGGDLDLRELQKTGRIGRIEVKIESKGGRSFGEIKVPSSLDKVETAILAAALETIERVGPCSAKIKVLKIEDVRASKRKRIVERAMNILREHFEEPEIESERIVEIVRQAIRADEIVEYGEEKLPAGPAIDESDAIIVVEGRADVLNLLKHGIKNVIAVEGTNIPKTIVELSKKKTVTAFLDGDRGGDLILKELLQVAEVDYVARAPEGKEVEDLTQKEILKSLRNKVPVEQLHVLKKEAKEGREREKLAEMPKDSISDVLRKHTESVKGRLTARVLDRNLNVIKEVPVRDLVKILKTNNMKGSAIVFDGIITQRLIDLAAKKEFDYIVGVRLGSVVKVPTSLRVITFDQL.

One can recognise a Toprim domain in the interval 182 to 268 (DAIIVVEGRA…EVEDLTQKEI (87 aa)). The Mg(2+) site is built by Glu188, Asp230, and Asp232.

The protein belongs to the archaeal DnaG primase family. As to quaternary structure, forms a ternary complex with MCM helicase and DNA. Component of the archaeal exosome complex. Mg(2+) serves as cofactor.

The enzyme catalyses ssDNA + n NTP = ssDNA/pppN(pN)n-1 hybrid + (n-1) diphosphate.. Its function is as follows. RNA polymerase that catalyzes the synthesis of short RNA molecules used as primers for DNA polymerase during DNA replication. Also part of the exosome, which is a complex involved in RNA degradation. Acts as a poly(A)-binding protein that enhances the interaction between heteromeric, adenine-rich transcripts and the exosome. This Archaeoglobus fulgidus (strain ATCC 49558 / DSM 4304 / JCM 9628 / NBRC 100126 / VC-16) protein is DNA primase DnaG.